We begin with the raw amino-acid sequence, 431 residues long: MGAPRLIHVIRQIGALVVAAVTAAATINAYRPLARNGFASLWSWFIGLVVTEFPLPTLASQLGGLVLTAQRLTRPVRAVSWLVAAFSALGLLNLSRAGRQADAQLTAALDSGLGPDRRTASAGLWRRPAGGGTAKTPGPLRMLRIYRDYAHDGDISYGEYGRANHLDIWRRPDLDLTGTAPVLFQIPGGAWTTGNKRGQAHPLMSHLAELGWICVAINYRHSPRNTWPDHIIDVKRALAWVKAHISEYGGDPDFIAITGGSAGGHLSSLAALTPNDPRFQPGFEEADTRVQAAVPFYGVYDFTRLQDAMHPMMLPLLERMVVKQPRTANMQSYLDASPVTHISADAPPFFVLHGRNDSLVPVQQARGFVDQLRQVSKQPVVYAELPFTQHAFDLLGSARAAHTAIAVEQFLAEVYATQHAGSEPGPAVAIP.

The next 3 membrane-spanning stretches (helical) occupy residues 7 to 27 (IHVIRQIGALVVAAVTAAATI), 38 to 58 (FASLWSWFIGLVVTEFPLPTL), and 75 to 95 (PVRAVSWLVAAFSALGLLNLS). Catalysis depends on residues Ser261, Asp357, and His390.

It belongs to the 'GDXG' lipolytic enzyme family.

It is found in the membrane. The chain is Probable carboxylic ester hydrolase LipM from Mycobacterium tuberculosis (strain ATCC 25618 / H37Rv).